The following is a 302-amino-acid chain: Phosphoribosylaminoimidazole-succinocarboxamide synthase (302 aa).

This sequence belongs to the SAICAR synthetase family.

It carries out the reaction 5-amino-1-(5-phospho-D-ribosyl)imidazole-4-carboxylate + L-aspartate + ATP = (2S)-2-[5-amino-1-(5-phospho-beta-D-ribosyl)imidazole-4-carboxamido]succinate + ADP + phosphate + 2 H(+). Its pathway is purine metabolism; IMP biosynthesis via de novo pathway; 5-amino-1-(5-phospho-D-ribosyl)imidazole-4-carboxamide from 5-amino-1-(5-phospho-D-ribosyl)imidazole-4-carboxylate: step 1/2. This chain is Phosphoribosylaminoimidazole-succinocarboxamide synthase, found in Leptothrix cholodnii (strain ATCC 51168 / LMG 8142 / SP-6) (Leptothrix discophora (strain SP-6)).